We begin with the raw amino-acid sequence, 145 residues long: Deoxyuridine 5'-triphosphate nucleotidohydrolase (145 aa).

Substrate-binding positions include 64–66, Asn-77, 81–83, and Met-91; these read RSG and TID.

The protein belongs to the dUTPase family. It depends on Mg(2+) as a cofactor.

The catalysed reaction is dUTP + H2O = dUMP + diphosphate + H(+). It functions in the pathway pyrimidine metabolism; dUMP biosynthesis; dUMP from dCTP (dUTP route): step 2/2. Functionally, this enzyme is involved in nucleotide metabolism: it produces dUMP, the immediate precursor of thymidine nucleotides and it decreases the intracellular concentration of dUTP so that uracil cannot be incorporated into DNA. In Leptospira interrogans serogroup Icterohaemorrhagiae serovar copenhageni (strain Fiocruz L1-130), this protein is Deoxyuridine 5'-triphosphate nucleotidohydrolase.